A 331-amino-acid polypeptide reads, in one-letter code: Adenosine deaminase (331 aa).

Residues His12 and His14 each contribute to the Zn(2+) site. Positions 14, 16, and 170 each coordinate substrate. His197 contributes to the Zn(2+) binding site. The active-site Proton donor is Glu200. Zn(2+) is bound at residue Asp278.

It belongs to the metallo-dependent hydrolases superfamily. Adenosine and AMP deaminases family. Adenosine deaminase subfamily. Zn(2+) is required as a cofactor.

It carries out the reaction adenosine + H2O + H(+) = inosine + NH4(+). It catalyses the reaction 2'-deoxyadenosine + H2O + H(+) = 2'-deoxyinosine + NH4(+). Catalyzes the hydrolytic deamination of adenosine and 2-deoxyadenosine. This is Adenosine deaminase from Vibrio vulnificus (strain YJ016).